We begin with the raw amino-acid sequence, 266 residues long: Undecaprenyl-diphosphatase (266 aa).

7 helical membrane passes run 41–61 (NLAF…VILW), 82–102 (YVIN…FFKD), 106–126 (AIFG…AALL), 140–160 (ISMK…LPGL), 180–200 (LAQF…LLDG), 213–233 (IPTL…CLAC), and 245–265 (LIYF…VSQL).

This sequence belongs to the UppP family.

It localises to the cell inner membrane. It carries out the reaction di-trans,octa-cis-undecaprenyl diphosphate + H2O = di-trans,octa-cis-undecaprenyl phosphate + phosphate + H(+). Functionally, catalyzes the dephosphorylation of undecaprenyl diphosphate (UPP). Confers resistance to bacitracin. The sequence is that of Undecaprenyl-diphosphatase from Bacteroides fragilis (strain YCH46).